Consider the following 270-residue polypeptide: Very long chain fatty acid elongase 3 (270 aa).

Asn6 carries an N-linked (GlcNAc...) asparagine glycan. Helical transmembrane passes span 29 to 49 (FFEE…VLIA) and 63 to 83 (LQGP…LGAV). A glycan (N-linked (GlcNAc...) asparagine) is linked at Asn110. 5 consecutive transmembrane segments (helical) span residues 115-135 (FWSW…AFII), 140-160 (PLIF…SFGY), 164-184 (VPAG…MYTY), 198-218 (LPML…IVSI), and 235-255 (HLFW…HFFC). Positions 266 to 270 (KTKSQ) match the Di-lysine motif motif.

Belongs to the ELO family. ELOVL3 subfamily. In terms of assembly, interacts with TECR. Post-translationally, N-Glycosylated. As to expression, testis.

The protein resides in the endoplasmic reticulum membrane. The catalysed reaction is a very-long-chain acyl-CoA + malonyl-CoA + H(+) = a very-long-chain 3-oxoacyl-CoA + CO2 + CoA. It carries out the reaction eicosanoyl-CoA + malonyl-CoA + H(+) = 3-oxodocosanoyl-CoA + CO2 + CoA. The enzyme catalyses hexadecanoyl-CoA + malonyl-CoA + H(+) = 3-oxooctadecanoyl-CoA + CO2 + CoA. It catalyses the reaction octadecanoyl-CoA + malonyl-CoA + H(+) = 3-oxoeicosanoyl-CoA + CO2 + CoA. The catalysed reaction is (9Z)-octadecenoyl-CoA + malonyl-CoA + H(+) = 3-oxo-(11Z)-eicosenoyl-CoA + CO2 + CoA. It carries out the reaction (9Z,12Z)-octadecadienoyl-CoA + malonyl-CoA + H(+) = (11Z,14Z)-3-oxoicosa-11,14-dienoyl-CoA + CO2 + CoA. The enzyme catalyses (9Z,12Z,15Z)-octadecatrienoyl-CoA + malonyl-CoA + H(+) = (11Z,14Z,17Z)-3-oxoeicosatrienoyl-CoA + CO2 + CoA. It catalyses the reaction docosanoyl-CoA + malonyl-CoA + H(+) = 3-oxotetracosanoyl-CoA + CO2 + CoA. The catalysed reaction is tetradecanoyl-CoA + malonyl-CoA + H(+) = 3-oxohexadecanoyl-CoA + CO2 + CoA. It participates in lipid metabolism; polyunsaturated fatty acid biosynthesis. Functionally, catalyzes the first and rate-limiting reaction of the four reactions that constitute the long-chain fatty acids elongation cycle. This endoplasmic reticulum-bound enzymatic process allows the addition of 2 carbons to the chain of long- and very long-chain fatty acids (VLCFAs) per cycle. Condensing enzyme that exhibits activity toward saturated and unsaturated acyl-CoA substrates with higher activity toward C18 acyl-CoAs, especially C18:0 acyl-CoAs. May participate in the production of saturated and monounsaturated VLCFAs of different chain lengths that are involved in multiple biological processes as precursors of membrane lipids and lipid mediators. In Homo sapiens (Human), this protein is Very long chain fatty acid elongase 3.